Reading from the N-terminus, the 285-residue chain is Thrombin-like enzyme TLBm (285 aa).

The region spanning 1 to 273 is the Peptidase S1 domain; sequence VIGGDECNIN…HLDWSQSVIA (273 aa). 6 cysteine pairs are disulfide-bonded: Cys-7-Cys-181, Cys-30-Cys-46, Cys-94-Cys-284, Cys-156-Cys-234, Cys-192-Cys-209, and Cys-224-Cys-249. Catalysis depends on charge relay system residues His-45 and Asp-113. The Charge relay system role is filled by Ser-228.

This sequence belongs to the peptidase S1 family. Snake venom subfamily. In terms of assembly, monomer. In terms of processing, homologous thrombin-like enzymes are N-glycosylated. This enzyme does not contain the consensus glycosylation sites, suggesting it is not glycosylated. In terms of tissue distribution, expressed by the venom gland.

It localises to the secreted. With respect to regulation, inhibited by PMSF, disodium-EDTA, S(Dm) and soybean trypsin inhibitor (SBTI). SBTI and S(Dm) (the anti-hemorrhagic protein) acts as a non-competitive inhibitors that decrease the enzymatic activity. Functionally, thrombin-like enzyme that induces the formation of fibrin clot. Cleaves the Aalpha-chain of fibrinogen (FGA) with higher activity than the Bbeta-chain (FGB). Induces platelet aggregation in both platelet-rich plasma and in washed platelet preparations. This aggregation is strongly inhibited by preincubation of the enzyme with PMSF. This is Thrombin-like enzyme TLBm from Bothrops marajoensis (Marajo lancehead).